Here is a 461-residue protein sequence, read N- to C-terminus: Putative cytochrome P450 132 (461 aa).

Position 409 (cysteine 409) interacts with heme.

Belongs to the cytochrome P450 family. The cofactor is heme.

The protein is Putative cytochrome P450 132 (cyp132) of Mycobacterium bovis (strain ATCC BAA-935 / AF2122/97).